The sequence spans 88 residues: Small ribosomal subunit protein bS20 (88 aa).

Positions 1–27 (MANTPQAKKRARQNEKARKHNASMRSM) are disordered. The span at 7–22 (AKKRARQNEKARKHNA) shows a compositional bias: basic residues.

This sequence belongs to the bacterial ribosomal protein bS20 family.

Its function is as follows. Binds directly to 16S ribosomal RNA. In Cellvibrio japonicus (strain Ueda107) (Pseudomonas fluorescens subsp. cellulosa), this protein is Small ribosomal subunit protein bS20.